A 605-amino-acid polypeptide reads, in one-letter code: Exo-beta-1,3-glucanase (605 aa).

Residues M1 to P23 form a disordered region. Positions M1–A44 are cleaved as a signal peptide. Substrate-binding positions include Q174, Y194–W196, Q217, W446–D449, and E480–H481. The active-site Proton donor is E502. Position 505 (Y505) interacts with substrate.

It belongs to the glycosyl hydrolase 55 family.

The protein localises to the secreted. It carries out the reaction Successive hydrolysis of beta-D-glucose units from the non-reducing ends of (1-&gt;3)-beta-D-glucans, releasing alpha-glucose.. Functionally, exo-beta-1,3-glucanase that specifically hydrolyzes laminarin and laminarioligosaccharides, producing glucose and laminaribiose as end products. This Streptomyces sp. (strain SirexAA-E / ActE) protein is Exo-beta-1,3-glucanase.